We begin with the raw amino-acid sequence, 60 residues long: UPF0434 protein Mfla_2088 (60 aa).

This sequence belongs to the UPF0434 family.

This Methylobacillus flagellatus (strain ATCC 51484 / DSM 6875 / VKM B-1610 / KT) protein is UPF0434 protein Mfla_2088.